A 279-amino-acid chain; its full sequence is MAQIGHNISLPERARRIRRHALRMGEVQGQGYIAQALGIADVLAVAYFHATTYRPDDPEWEGRDRFLLSIGHYAIALYAALIEAKIIPEDELETYGADDSRLPMSGMAAYTPGMEITGGSLGHGLGIAVGMSLALKRKGSRSFVYNLFSDGELDEGSTWEAAMSAGSYKLDNLIGIVDVNQMQADGPSLGVLNFEPLGPKFEAFGWYVQRIDGNDIDALVDAFDNARQHRHPQPRIIICDTKMAKGVPFLEARERNHFLRVEPQEWAEAIRIIDAGVTA.

3 consecutive transmembrane segments (helical) span residues 31–51 (GYIAQALGIADVLAVAYFHAT), 67–87 (LLSIGHYAIALYAALIEAKII), and 115–135 (EITGGSLGHGLGIAVGMSLAL).

This sequence belongs to the transketolase family. It depends on thiamine diphosphate as a cofactor.

Its subcellular location is the cell membrane. This is an uncharacterized protein from Sinorhizobium fredii (strain NBRC 101917 / NGR234).